The primary structure comprises 555 residues: Hydrogenase-4 component G (555 aa).

It belongs to the complex I 49 kDa subunit family. The cofactor is [4Fe-4S] cluster.

Possible component of hydrogenase 4. This is Hydrogenase-4 component G from Escherichia coli (strain K12).